Here is a 207-residue protein sequence, read N- to C-terminus: Dephospho-CoA kinase (207 aa).

The 196-residue stretch at 12 to 207 (LIGITGMIGG…LYSTLLGKML (196 aa)) folds into the DPCK domain. ATP is bound at residue 20–25 (GGGKST).

Belongs to the CoaE family.

The protein localises to the cytoplasm. The catalysed reaction is 3'-dephospho-CoA + ATP = ADP + CoA + H(+). The protein operates within cofactor biosynthesis; coenzyme A biosynthesis; CoA from (R)-pantothenate: step 5/5. Functionally, catalyzes the phosphorylation of the 3'-hydroxyl group of dephosphocoenzyme A to form coenzyme A. The protein is Dephospho-CoA kinase of Leptospira interrogans serogroup Icterohaemorrhagiae serovar Lai (strain 56601).